The primary structure comprises 176 residues: Inner membrane assembly complex subunit 17 (176 aa).

Residues 1-28 constitute a mitochondrion transit peptide; it reads MLRVLPTSFKSISTRSAFRACQLSPLTV. Residues 29–98 are Mitochondrial matrix-facing; the sequence is YCPLKSSQGT…MSQEVSLKRF (70 aa). Residues 99 to 121 form a helical membrane-spanning segment; that stretch reads VRPLWVFFLMSSTVYLILHYVWW. At 122–176 the chain is on the mitochondrial intermembrane side; the sequence is KLEVVEKEKELQSHVESLEMELDQTLKSQNQNVSSSQNNGNNKTNDKPWYRKWFF. Residues 123 to 151 are a coiled coil; it reads LEVVEKEKELQSHVESLEMELDQTLKSQN. The span at 149–163 shows a compositional bias: low complexity; sequence SQNQNVSSSQNNGNN. Residues 149-168 are disordered; sequence SQNQNVSSSQNNGNNKTNDK.

This sequence belongs to the INA17 family. As to quaternary structure, component of the inner membrane assembly (INA) complex, composed of INA17 and INA22. Interacts with a subset of F(1)F(0)-ATP synthase subunits of the F(1)-domain and the peripheral stalk.

The protein localises to the mitochondrion inner membrane. In terms of biological role, component of the INA complex (INAC) that promotes the biogenesis of mitochondrial F(1)F(0)-ATP synthase. INAC facilitates the assembly of the peripheral stalk and promotes the assembly of the catalytic F(1)-domain with the membrane-embedded F(0)-domain. The polypeptide is Inner membrane assembly complex subunit 17 (Zygosaccharomyces rouxii (strain ATCC 2623 / CBS 732 / NBRC 1130 / NCYC 568 / NRRL Y-229)).